We begin with the raw amino-acid sequence, 141 residues long: Protein archease (141 aa).

The Ca(2+) site is built by D19 and D140.

It belongs to the archease family.

In terms of biological role, activates the tRNA-splicing ligase complex by facilitating the enzymatic turnover of catalytic subunit RtcB. Acts by promoting the guanylylation of RtcB, a key intermediate step in tRNA ligation. Can also alter the NTP specificity of RtcB such that ATP, dGTP or ITP is used efficiently. The sequence is that of Protein archease from Thermoplasma acidophilum (strain ATCC 25905 / DSM 1728 / JCM 9062 / NBRC 15155 / AMRC-C165).